The following is a 495-amino-acid chain: Guanosine-5'-triphosphate,3'-diphosphate pyrophosphatase (495 aa).

It belongs to the GppA/Ppx family. GppA subfamily.

It carries out the reaction guanosine 3'-diphosphate 5'-triphosphate + H2O = guanosine 3',5'-bis(diphosphate) + phosphate + H(+). It participates in purine metabolism; ppGpp biosynthesis; ppGpp from GTP: step 2/2. Its function is as follows. Catalyzes the conversion of pppGpp to ppGpp. Guanosine pentaphosphate (pppGpp) is a cytoplasmic signaling molecule which together with ppGpp controls the 'stringent response', an adaptive process that allows bacteria to respond to amino acid starvation, resulting in the coordinated regulation of numerous cellular activities. The chain is Guanosine-5'-triphosphate,3'-diphosphate pyrophosphatase from Enterobacter sp. (strain 638).